Here is a 396-residue protein sequence, read N- to C-terminus: Elongation factor Tu (396 aa).

Residues 10-206 form the tr-type G domain; the sequence is KPHVNIGTIG…AVDESVPDPV (197 aa). The segment at 19–26 is G1; it reads GHVDHGKT. 19–26 provides a ligand contact to GTP; that stretch reads GHVDHGKT. T26 serves as a coordination point for Mg(2+). A G2 region spans residues 62–66; it reads GITIN. The tract at residues 83–86 is G3; that stretch reads DAPG. GTP contacts are provided by residues 83-87 and 138-141; these read DAPGH and NKSD. A G4 region spans residues 138 to 141; that stretch reads NKSD. A G5 region spans residues 176–178; the sequence is SGL.

It belongs to the TRAFAC class translation factor GTPase superfamily. Classic translation factor GTPase family. EF-Tu/EF-1A subfamily. As to quaternary structure, monomer.

Its subcellular location is the cytoplasm. The enzyme catalyses GTP + H2O = GDP + phosphate + H(+). Functionally, GTP hydrolase that promotes the GTP-dependent binding of aminoacyl-tRNA to the A-site of ribosomes during protein biosynthesis. This chain is Elongation factor Tu, found in Pseudarthrobacter chlorophenolicus (strain ATCC 700700 / DSM 12829 / CIP 107037 / JCM 12360 / KCTC 9906 / NCIMB 13794 / A6) (Arthrobacter chlorophenolicus).